Consider the following 564-residue polypeptide: Benomyl/methotrexate resistance protein (564 aa).

The tract at residues 60 to 101 (IDNQGEPNSSQSSSSNNTIVDNNNNNNNDVDGDKIVVTWDGD) is disordered. Positions 67-88 (NSSQSSSSNNTIVDNNNNNNND) are enriched in low complexity. Transmembrane regions (helical) follow at residues 116–136 (AFFI…SAVY), 153–173 (VATL…LVFS), 184–204 (TSIY…TALV), 210–229 (LCIL…ATGG), 241–262 (LPVG…GPFF), 274–294 (WTFW…CFTL), 358–374 (IYIA…FEVF), 393–411 (YMSI…IPVI), 431–451 (IPIA…FGWS), 457–476 (HWVG…FLIF), 489–506 (PHYI…RSVI), and 530–551 (WGSS…LFYL).

It belongs to the major facilitator superfamily. CAR1 family.

Its subcellular location is the membrane. In terms of biological role, probable transporter. Confers resistance to benomyl and methotrexate. The protein is Benomyl/methotrexate resistance protein (MDR1) of Candida albicans (Yeast).